We begin with the raw amino-acid sequence, 127 residues long: Large ribosomal subunit protein uL22 (127 aa).

It belongs to the universal ribosomal protein uL22 family. In terms of assembly, part of the 50S ribosomal subunit.

Functionally, this protein binds specifically to 23S rRNA; its binding is stimulated by other ribosomal proteins, e.g. L4, L17, and L20. It is important during the early stages of 50S assembly. It makes multiple contacts with different domains of the 23S rRNA in the assembled 50S subunit and ribosome. The globular domain of the protein is located near the polypeptide exit tunnel on the outside of the subunit, while an extended beta-hairpin is found that lines the wall of the exit tunnel in the center of the 70S ribosome. The protein is Large ribosomal subunit protein uL22 of Methylobacterium sp. (strain 4-46).